Consider the following 4543-residue polypeptide: MGPLLALAGCLLALLAAPAARALEAPKTCSPKQFACKDQITCISKGWRCDGEKDCPDGSDESPDICPQSKVSRCQPNEHNCLGTELCIHMSKLCNGLHDCFDGSDEGPHCREQLANCTALGCQHHCVPTLSGPACYCNNSFQLAEDRRSCKDFDECTVYGTCSQTCTNTEGSYTCSCVEGYLLQPDNRSCKAKNEPVDRPPVLLIANSQNILATYLSGAPVPNITPTSAKQTTAMDFNYIEDTVCWVHVGDSASQTILKCAKIPNLKGFVEERSINISLSLHQVEQMAIDWLTGNFYFVDDIDDRIFVCNKNGLTCVTLLDLELYNPKGIALDPAMGKVFFTDYGQIPKVERCDMDGQNRTKLVDSKIVFPHGITLDLVSRLVYWADAYLDYIEVVDYEGKNRHTIIQGILIEHLYGLTVFENYLYATNSDNANAQQKTSVIRVNRFNSTEYQVVTRVDKGGALHIYHQRRQPTVRSHACEPDQFGKPGGCSDICLLGNSHKSRTCRCRSGFSLGSDGKSCKKPEHELFLVYGKGRPGIIRGMDMGAKVPDEHMIPIENLMNPRALDFHAETGFIYFADTTSYLIGRQKIDGTERETILKDGIHNVEGIAVDWMGNNLYWTDDGPKKTISVARLEKAAQTRKTLIEGKMTHPRAIVVDPLNGWMYWTDWEEDPKDSKRGKIERAWMDGSNRNVFITSKTVLWPNGLSLDIPAKILYWVDAFYDRIEMVYLNGTERKIVYEGPELNHAFGLCHYSSFLFWTEYRSGSIYRLDQSSKAVSLLRNERPPIFEIRMYDAQQQQVGSNKCRVNNGGCSSLCLATPRGRQCACAEDQILGADSVTCEANPSYIPPPQCQPGEFACKNNRCIQERWKCDGDNDCLDNSDEAPELCHQHTCPSDRFKCKNNRCIPNRWLCDGDNDCGNNEDESNSTCSARTCSPNQFSCASGRCIPISWTCDLDDDCGDRSDESASCAYPTCFPLTQFTCNNGRCININWRCDNDNDCGDNSDEAGCSHSCSSNQFKCNSGRCIPVHWTCDGDNDCGDYSDETHANCTNQATRPPGGCHTDEFQCRLDGLCIPMRWRCDGDTDCMDSSDEKNCEGVTHVCDPNVKFGCKDSARCISKAWVCDGDSDCEDNSDEENCESLVCKPPSHTCANNTSICLPPEKLCDGSDDCGDGSDEGELCDQCSLNNGGCSHNCTVAPGEGIVCSCPLGMELGADNKTCQIQSYCAKHLKCSQKCEQDKYNVKCSCYEGWMLEPDGESCRSLDPFKPFIIFSNRHEIRRIDLHRGDYSVLVPGLRNTIALDFHLNQSSLYWTDVVEDKIYRGKLLENGALTSFEVVIQYGLATPEGLAVDWIAGNIYWVESNLDQIEVAKLDGTMRTTLLAGDIEHPRAIALDPRYGILFWTDWDASLPRIEAASMSGAGRRTIHKETGSGGWPNGLTVDYLEKRILWIDARSDAIYSALYDGTGHIEVLRGHEYLSHPFAVTLYGGEVYWTDWRTNTLAKANKWTGHNVTVVQRTNTQPFDLQVYHPSRQPLAPNPCEANGGKGPCSHLCLINYNRTLSCACPHLMKLDKDNTTCYEFKKFLLYARQMEIRGVDIDNPYYNYIISFTVPDIDNVTVVDYDAVEQRIYWSDVRTQTIKRAFINGTGVETVVSADLPNAHGLSVDWVSRNLFWTSYDTNKKQINVARLDGSFKNAVIQGLDKPHCLVVHPLHGKLYWTDGDNISVANMDGSNRTLLFTNQRGPVGLAIDYPESKLYWISSGNGTINRCNLDGSDLEVIVAVKSQLSKATALAIMGDKLWWADQASERMGTCNKKDGTEVTVLRNSTTLVMLMKVYDESIQQAGSNPCSVNNGDCSQLCLPTSETSRSCMCTAGYSLKSGQQSCEGVGSFLLYSVHEGIRGIPLDPNDKSDALVPVSGTSLAVGIDFHAENDTIYWVDMGLSTISRAKRDQTWREDVVTNGIGRVEGIAVDWIAGNIYWTDQGFDVIEVARLNGSFRYVVISQGLDKPRAITVHPEKGYLFWTEWGQYPRIERSRLDGTERMVLVNVSISWPNGISVDYEDGKLYWCDARTDKIERIDLETGENREVVLSSDNMDMFSVSVFEDYIYWSDRTHANGSIKRGSKDNATESVSLRTGIGVQLKDIKVFNRARQKGTNVCAQNNGGCQQLCLFRGGGRRTCACAHGMLSEDGVSCRDYDGYLLYSERTILKSIHLSDENNLNAPIKPFEDAEHMKNVIALAFDYRYGTKGSNRIFYSDIHFGNIQQINDDGTGRRTIVENVGSVEGLAYHRGWDTLYWTSYTTSTITRHTVDQSRLGAFERETVITMSGDDHPRAFVLDECQNLMFWTNWNEQHPSIMRATLSGANVLIIIDQDIRTPNGLAIDHRAEKIYFSDATLDKIERCEYDGSHRHVILKSEPVHPFGLAVYGDYIFWTDWVRRAVQRANKYVGTDMKLLRVDIPQQPMGIIAVANDTDSCELSPCRVNNGGCQDLCLLTPKGHVNCSCRGERVLQEDFTCKALNSTCNVHDEFECGNGDCIDFSRTCDGVVHCKDKSDEKQSYCSSRKCKKGFLHCMNGRCVASRFWCNGVDDCGDNSDEVPCNKTSCAATEFRCRDGSCIGNSSRCNQFIDCEDASDEMNCTATDCSSYFKLGVKGTTFQKCEHTSLCYAPSWVCDGANDCGDYSDERNCPGGRKPKCPANYFACPSGRCIPMTWTCDKEDDCENGEDETHCSERQDKFCYPVQFECNNHRCISKLWVCDGADDCGDGSDEDSRCRLTTCSTGSFQCPGTYVCVPERWLCDGDKDCADGADETLAAGCLYNNTCDEREFMCGNRQCIPKHFVCDHDDDCGDGSDESPECEYPTCGPHEFRCANGRCLSNSQWECDGEFDCHDHSDEAPKNPRCSSPESKCNDSFFMCKNGKCIPEALLCDNNNDCADGSDELNCFINECLNKKLSGCSQECEDLKIGYKCRCRPGFRLKDDGKTCIDIDECSTTYPCSQKCINTLGSYKCLCIEGYKLKPDNPTSCKAVTDEEPFLIFANRYYLRKLNLDGSNYTLLKQGLNNAVALDFDYREQMIYWTDVTTQGSMIRRMHINGSNVQVLHRTGLSNPDGLAVDWVGGNLYWCDKGRDTIEVSKLNGAYRTVLVNSGLREPRALVVDVQNGYLYWTDWGDHSLIGKIGMDGTNRSVIVDTKITWPNGLTLDYINSRIYWADAREDYIEFASLDGSNRHTVLSQDIPHIFALTLFEDYIYWTDWETKSINRAHKTTGANKTLLISTLHRPMDIHIYHPYRQPDVPNHPCKTNNAGCSNLCLLSPGGGHKCACPTNFYLGSDGKTCVSNCTASQFVCKNDKCIPFWWKCDTEDDCGDRSDEPEDCPEFKCRPGQFQCSTGICTNPAFICDGDNDCQDNSDEANCDIHVCLPSQFKCTNTNRCIPGIFRCNGQDNCGDGEDEKDCPEVTCAPNQFQCAITKRCIPRVWVCDRDNDCVDGSDEPANCTQMTCGVDEFRCKDSGRCIPARWKCDGEDDCGDGSDEPKEECDERTCEPYQFRCKNNRCVPGRWQCDYDNDCGDNSDEESCTPRPCSESEFSCANGRCIAGRWKCDGDHDCADGSDEKDCIPRCEFDQYQCKNGHCIPMRWRCDADADCMDGTDEEDCGTGVRTCPLDEFQCNNTLRKPLAWKCDGEDDCGDNSDENPEECLKFQCPPNRPFRCKNDRVCLWIGRQCDGIDNCGDNTDEKDCESPTAKPKSCSQDKNEFLCENKKCISANLRCNFFDDCGDGSDEKSCSHEHKSYDCMTNTTMCGDEAQCIQAQSSTYCTCRRGFQKVPDKNSCQDVNECLRFGTCSQLCNNTKGSHVCSCAKNFMKTDNMCKAEGSEHQILYIADDNKIRSMYPFNPNSAYEPAFQGDENVRIDAMDIYVKGNKIYWTNWHTGRISYCELPASSAASTASNRNRRQIDGGVTHLNISGLKMPRGIAVDWVAGNIYWTDSGRDVIEVAQMKGENRKTLISGMIDEPHAIVVDPLRGTMYWSDWGNHPKIETAAMDGTLRETLVQDNIQWPTGLAVDYHNERLYWADAKLSVIGSIRLNGTDPVVAIDNKKGLSHPFSIDIFEDYIYGVTYINNRIFKIHKFGHKSVTNLTSGLNHATDVVLYHQYKQPEVTNPCDRKKCEWLCLLSPSGPVCTCPNGKRLDNGTCVLIPSPTASAVVPTTDTCDLVCLNGGSCFLNARKQAKCRCQPRYNGERCQINQCSDYCQNGGLCTASPSGMPTCRCPTGFTGSRCDQQVCTNYCHNNGSCTVNQGNQPNCRCPPTFIGDRCQYQQCFNYCENNGVCQMSRDGVKQCRCPPQFEGAQCQDNKCSRCQEGKCNINRQSGDVSCICPDGKIAPSCLTCDSYCLNGGTCSISDKTQLPECLCPLEVTGMRCEEFIVGEQQSGRTASIVIPILLLLLLLAVVAFAWYKWRIKGAKGFQHQRMTNGAMNVEIGNPTYKMYEGEPDDDVGELLDADFALDPDKPTNFTNPVYATLYMGAHSSRNSLASTDEKRELLARGADDDLTDPLA.

The N-terminal stretch at 1 to 21 is a signal peptide; it reads MGPLLALAGCLLALLAAPAAR. Residues 22–4419 lie on the Extracellular side of the membrane; that stretch reads ALEAPKTCSP…EFIVGEQQSG (4398 aa). LDL-receptor class A domains are found at residues 27 to 68 and 72 to 112; these read KTCS…ICPQ and SRCQ…HCRE. 6 disulfide bridges follow: Cys-29–Cys-42, Cys-36–Cys-55, Cys-49–Cys-66, Cys-74–Cys-87, Cys-81–Cys-100, and Cys-94–Cys-110. Residues 113–151 form the EGF-like 1 domain; it reads QLANCTALGCQHHCVPTLSGPACYCNNSFQLAEDRRSCK. Asn-116 is a glycosylation site (N-linked (GlcNAc...) asparagine). Intrachain disulfides connect Cys-117/Cys-126, Cys-122/Cys-135, Cys-137/Cys-150, Cys-156/Cys-166, Cys-162/Cys-175, and Cys-177/Cys-190. Asn-138 is a glycosylation site (N-linked (GlcNAc...) asparagine). One can recognise an EGF-like 2; calcium-binding domain in the interval 152–191; that stretch reads DFDECTVYGTCSQTCTNTEGSYTCSCVEGYLLQPDNRSCK. Asn-187 and Asn-276 each carry an N-linked (GlcNAc...) asparagine glycan. 3 LDL-receptor class B repeats span residues 294–336, 337–380, and 381–424; these read GNFY…DPAM, GKVF…DLVS, and RLVY…FENY. A glycan (N-linked (GlcNAc...) asparagine) is linked at Asn-359. Residue Asn-448 is glycosylated (N-linked (GlcNAc...) asparagine). The region spanning 476-522 is the EGF-like 3 domain; that stretch reads RSHACEPDQFGKPGGCSDICLLGNSHKSRTCRCRSGFSLGSDGKSCK. Disulfide bonds link Cys-480-Cys-495, Cys-491-Cys-506, and Cys-508-Cys-521. LDL-receptor class B repeat units lie at residues 573 to 615, 616 to 661, 662 to 712, and 713 to 756; these read GFIY…DWMG, NNLY…DPLN, GWMY…DIPA, and KILY…YSSF. Residue Asn-731 is glycosylated (N-linked (GlcNAc...) asparagine). The region spanning 801 to 841 is the EGF-like 4 domain; sequence GSNKCRVNNGGCSSLCLATPRGRQCACAEDQILGADSVTCE. 33 cysteine pairs are disulfide-bonded: Cys-805–Cys-816, Cys-812–Cys-825, Cys-827–Cys-840, Cys-852–Cys-864, Cys-859–Cys-877, Cys-871–Cys-888, Cys-893–Cys-905, Cys-900–Cys-918, Cys-912–Cys-929, Cys-934–Cys-946, Cys-941–Cys-959, Cys-953–Cys-969, Cys-974–Cys-987, Cys-982–Cys-1000, Cys-994–Cys-1009, Cys-1013–Cys-1025, Cys-1020–Cys-1038, Cys-1032–Cys-1049, Cys-1060–Cys-1073, Cys-1067–Cys-1086, Cys-1080–Cys-1095, Cys-1102–Cys-1116, Cys-1110–Cys-1129, Cys-1123–Cys-1138, Cys-1143–Cys-1157, Cys-1150–Cys-1170, Cys-1164–Cys-1180, Cys-1183–Cys-1194, Cys-1190–Cys-1204, Cys-1206–Cys-1219, Cys-1225–Cys-1235, Cys-1231–Cys-1244, and Cys-1246–Cys-1259. LDL-receptor class A domains lie at 850 to 890, 891 to 931, 932 to 971, 972 to 1011, 1011 to 1051, 1058 to 1097, 1100 to 1140, and 1141 to 1180; these read PQCQ…LCHQ, HTCP…TCSA, RTCS…SCAY, PTCF…GCSH, HSCS…NCTN, GGCH…NCEG, HVCD…NCES, and LVCK…GELC. Positions 869, 872, 874, 876, 882, and 883 each coordinate Ca(2+). The N-linked (GlcNAc...) asparagine glycan is linked to Asn-926. Residues Trp-1030, Asp-1033, Asp-1035, Asp-1037, Asp-1043, and Glu-1044 each coordinate Ca(2+). N-linked (GlcNAc...) asparagine glycosylation is present at Asn-1048. Positions 1078, 1081, 1083, 1085, 1091, and 1092 each coordinate Ca(2+). 2 N-linked (GlcNAc...) asparagine glycosylation sites follow: Asn-1152 and Asn-1153. EGF-like domains are found at residues 1181-1220 and 1221-1260; these read DQCS…KTCQ and IQSY…ESCR. Asn-1193 and Asn-1216 each carry an N-linked (GlcNAc...) asparagine glycan. Residue Asn-1305 is glycosylated (N-linked (GlcNAc...) asparagine). LDL-receptor class B repeat units lie at residues 1307–1353, 1354–1396, 1397–1443, 1444–1488, and 1489–1529; these read SSLY…DWIA, GNIY…DPRY, GILF…DYLE, KRIL…YGGE, and VYWT…YHPS. N-linked (GlcNAc...) asparagine glycosylation is present at Asn-1509. In terms of domain architecture, EGF-like 7 spans 1534-1577; sequence APNPCEANGGKGPCSHLCLINYNRTLSCACPHLMKLDKDNTTCY. 3 disulfides stabilise this stretch: Cys-1538-Cys-1551, Cys-1547-Cys-1561, and Cys-1563-Cys-1576. 4 N-linked (GlcNAc...) asparagine glycosylation sites follow: Asn-1556, Asn-1573, Asn-1614, and Asn-1643. LDL-receptor class B repeat units lie at residues 1625–1667, 1668–1711, 1712–1751, and 1752–1796; these read QRIY…DWVS, RNLF…HPLH, GKLY…DYPE, and SKLY…MGDK. N-linked (GlcNAc...) asparagine glycans are attached at residues Asn-1721, Asn-1731, Asn-1761, and Asn-1823. The region spanning 1842 to 1883 is the EGF-like 8 domain; the sequence is GSNPCSVNNGDCSQLCLPTSETSRSCMCTAGYSLKSGQQSCE. Disulfide bonds link Cys-1846/Cys-1857, Cys-1853/Cys-1867, and Cys-1869/Cys-1882. The N-linked (GlcNAc...) asparagine glycan is linked to Asn-1929. LDL-receptor class B repeat units lie at residues 1930–1972, 1973–2015, 2016–2059, and 2060–2103; these read DTIY…DWIA, GNIY…HPEK, GYLF…DYED, and GKLY…FEDY. 2 N-linked (GlcNAc...) asparagine glycosylation sites follow: Asn-1991 and Asn-2044. 2 N-linked (GlcNAc...) asparagine glycosylation sites follow: Asn-2113 and Asn-2123. Residues 2151 to 2191 form the EGF-like 9 domain; the sequence is GTNVCAQNNGGCQQLCLFRGGGRRTCACAHGMLSEDGVSCR. Cystine bridges form between Cys-2155–Cys-2166, Cys-2162–Cys-2176, and Cys-2178–Cys-2190. LDL-receptor class B repeat units lie at residues 2247-2288, 2289-2337, 2338-2382, 2383-2425, and 2426-2467; these read NRIF…HRGW, DTLY…DECQ, NLMF…DHRA, EKIY…YGDY, and IFWT…VAND. An N-linked (GlcNAc...) asparagine glycan is attached at Asn-2466. In terms of domain architecture, EGF-like 10 spans 2472–2512; that stretch reads ELSPCRVNNGGCQDLCLLTPKGHVNCSCRGERVLQEDFTCK. Disulfide bonds link Cys-2476/Cys-2487, Cys-2483/Cys-2497, and Cys-2499/Cys-2511. An N-linked (GlcNAc...) asparagine glycan is attached at Asn-2496. Asn-2515 carries N-linked (GlcNAc...) asparagine glycosylation. 7 LDL-receptor class A domains span residues 2516 to 2557, 2558 to 2596, 2597 to 2635, 2636 to 2684, 2688 to 2730, 2730 to 2769, and 2770 to 2812; these read STCN…YCSS, RKCK…PCNK, TSCA…NCTA, TDCS…NCPG, PKCP…RQDK, KFCY…RCRL, and TTCS…GCLY. Cystine bridges form between Cys-2518/Cys-2531, Cys-2526/Cys-2544, Cys-2538/Cys-2555, Cys-2560/Cys-2572, Cys-2567/Cys-2585, and Cys-2579/Cys-2594. A glycan (N-linked (GlcNAc...) asparagine) is linked at Asn-2595. 15 disulfides stabilise this stretch: Cys-2599-Cys-2611, Cys-2606-Cys-2624, Cys-2618-Cys-2633, Cys-2638-Cys-2660, Cys-2654-Cys-2673, Cys-2667-Cys-2682, Cys-2690-Cys-2702, Cys-2697-Cys-2715, Cys-2709-Cys-2724, Cys-2732-Cys-2744, Cys-2739-Cys-2757, Cys-2751-Cys-2767, Cys-2772-Cys-2785, Cys-2779-Cys-2798, and Cys-2792-Cys-2810. 2 N-linked (GlcNAc...) asparagine glycosylation sites follow: Asn-2614 and Asn-2632. A glycan (N-linked (GlcNAc...) asparagine) is linked at Asn-2813. LDL-receptor class A domains lie at 2814 to 2853, 2854 to 2897, and 2900 to 2938; these read NTCD…ECEY, PTCG…RCSS, and SKCN…NCFI. Disulfide bonds link Cys-2816-Cys-2828, Cys-2823-Cys-2841, Cys-2835-Cys-2851, Cys-2856-Cys-2868, Cys-2863-Cys-2882, Cys-2876-Cys-2895, Cys-2902-Cys-2914, Cys-2909-Cys-2927, Cys-2921-Cys-2936, Cys-2941-Cys-2953, Cys-2949-Cys-2962, Cys-2964-Cys-2977, Cys-2983-Cys-2993, Cys-2989-Cys-3002, and Cys-3004-Cys-3018. Asn-2903 is a glycosylation site (N-linked (GlcNAc...) asparagine). An EGF-like 11 domain is found at 2939-2978; sequence NECLNKKLSGCSQECEDLKIGYKCRCRPGFRLKDDGKTCI. The EGF-like 12; calcium-binding domain maps to 2979-3019; that stretch reads DIDECSTTYPCSQKCINTLGSYKCLCIEGYKLKPDNPTSCK. 2 N-linked (GlcNAc...) asparagine glycosylation sites follow: Asn-3045 and Asn-3086. LDL-receptor class B repeat units lie at residues 3066-3110, 3111-3153, 3154-3197, 3198-3240, and 3241-3281; these read QMIY…DWVG, GNLY…DVQN, GYLY…DYIN, SRIY…FEDY, and IYWT…YHPY. Asn-3176 is a glycosylation site (N-linked (GlcNAc...) asparagine). Asn-3261 carries an N-linked (GlcNAc...) asparagine glycan. One can recognise an EGF-like 13 domain in the interval 3287-3328; it reads PNHPCKTNNAGCSNLCLLSPGGGHKCACPTNFYLGSDGKTCV. 3 disulfides stabilise this stretch: Cys-3291–Cys-3302, Cys-3298–Cys-3312, and Cys-3314–Cys-3327. 11 consecutive LDL-receptor class A domains span residues 3329-3368, 3369-3407, 3408-3447, 3448-3488, 3489-3530, 3531-3569, 3570-3608, 3608-3646, 3649-3689, 3690-3730, and 3736-3776; these read SNCT…DCPE, FKCR…NCDI, HVCL…DCPE, VTCA…NCTQ, MTCG…ECDE, RTCE…SCTP, RPCS…DCIP, PRCE…DCGT, RTCP…ECLK, FQCP…DCES, and KSCS…SCSH. N-linked (GlcNAc...) asparagine glycosylation occurs at Asn-3330. 38 disulfides stabilise this stretch: Cys-3331–Cys-3343, Cys-3338–Cys-3356, Cys-3350–Cys-3366, Cys-3371–Cys-3383, Cys-3378–Cys-3396, Cys-3390–Cys-3405, Cys-3410–Cys-3423, Cys-3417–Cys-3436, Cys-3430–Cys-3445, Cys-3450–Cys-3463, Cys-3457–Cys-3476, Cys-3470–Cys-3486, Cys-3491–Cys-3504, Cys-3498–Cys-3517, Cys-3511–Cys-3528, Cys-3533–Cys-3545, Cys-3540–Cys-3558, Cys-3552–Cys-3567, Cys-3572–Cys-3584, Cys-3579–Cys-3597, Cys-3591–Cys-3606, Cys-3610–Cys-3622, Cys-3617–Cys-3635, Cys-3629–Cys-3644, Cys-3658–Cys-3676, Cys-3670–Cys-3687, Cys-3692–Cys-3706, Cys-3700–Cys-3719, Cys-3713–Cys-3728, Cys-3738–Cys-3752, Cys-3747–Cys-3765, Cys-3759–Cys-3774, Cys-3783–Cys-3796, Cys-3790–Cys-3805, Cys-3807–Cys-3820, Cys-3826–Cys-3836, Cys-3832–Cys-3845, and Cys-3847–Cys-3858. Asn-3485 carries an N-linked (GlcNAc...) asparagine glycan. A glycan (N-linked (GlcNAc...) asparagine) is linked at Asn-3659. EGF-like domains follow at residues 3779-3821 and 3822-3859; these read KSYD…NSCQ and DVNE…NMCK. An N-linked (GlcNAc...) asparagine glycan is attached at Asn-3786. An N-linked (GlcNAc...) asparagine glycan is attached at Asn-3837. LDL-receptor class B repeat units follow at residues 3910-3952, 3969-4011, 4012-4055, and 4056-4100; these read NKIY…THLN, GNIY…DPLR, GTMY…DYHN, and ERLY…FEDY. A Recognition site for proteolytical processing motif is present at residues 3939–3942; it reads RNRR. Asn-3952 carries an N-linked (GlcNAc...) asparagine glycan. Asn-4074 and Asn-4124 each carry an N-linked (GlcNAc...) asparagine glycan. EGF-like domains are found at residues 4146–4182, 4195–4231, 4231–4267, 4267–4303, 4303–4339, 4339–4374, and 4372–4409; these read VTNP…GTCV, TTDT…ERCQ, QINQ…SRCD, DQQV…DRCQ, QYQQ…AQCQ, QDNK…PSCL, and SCLT…MRCE. Cystine bridges form between Cys-4150/Cys-4159, Cys-4155/Cys-4168, Cys-4170/Cys-4181, Cys-4199/Cys-4209, Cys-4203/Cys-4219, Cys-4221/Cys-4230, Cys-4235/Cys-4245, Cys-4239/Cys-4255, Cys-4257/Cys-4266, Cys-4271/Cys-4281, Cys-4275/Cys-4291, Cys-4293/Cys-4302, Cys-4307/Cys-4317, Cys-4311/Cys-4327, Cys-4329/Cys-4338, Cys-4343/Cys-4351, Cys-4346/Cys-4362, Cys-4364/Cys-4373, Cys-4376/Cys-4386, Cys-4380/Cys-4397, and Cys-4399/Cys-4408. Asn-4178 carries an N-linked (GlcNAc...) asparagine glycan. The N-linked (GlcNAc...) asparagine glycan is linked to Asn-4278. Residues 4420–4443 traverse the membrane as a helical segment; that stretch reads RTASIVIPILLLLLLLAVVAFAWY. Topologically, residues 4444–4543 are cytoplasmic; the sequence is KWRIKGAKGF…ADDDLTDPLA (100 aa). The NPXY motif motif lies at 4501–4506; sequence FTNPVY. A disordered region spans residues 4522 to 4543; it reads STDEKRELLARGADDDLTDPLA. Basic and acidic residues predominate over residues 4523 to 4535; the sequence is TDEKRELLARGAD.

It belongs to the LDLR family. In terms of assembly, binds vitellogenin and LRPAP1 (alpha 2-macroglobulin). Post-translationally, cleaved into a 85 kDa membrane-spanning subunit (LRP-85) and a 515 kDa large extracellular domain (LRP-515) that remains non-covalently associated. In terms of tissue distribution, somatic.

It localises to the membrane. Its subcellular location is the coated pit. Endocytic receptor involved in endocytosis and in phagocytosis of apoptotic cells. Involved in cellular lipid homeostasis. Involved in the plasma clearance of chylomicron remnants and activated LRPAP1 (alpha 2-macroglobulin), as well as the local metabolism of complexes between plasminogen activators and their endogenous inhibitors. Acts as an alpha-2-macroglobulin receptor. This chain is Low-density lipoprotein receptor-related protein 1 (LRP1), found in Gallus gallus (Chicken).